Reading from the N-terminus, the 132-residue chain is Prefoldin subunit alpha (132 aa).

The protein belongs to the prefoldin subunit alpha family. In terms of assembly, heterohexamer of two alpha and four beta subunits.

The protein resides in the cytoplasm. Its function is as follows. Molecular chaperone capable of stabilizing a range of proteins. Seems to fulfill an ATP-independent, HSP70-like function in archaeal de novo protein folding. The chain is Prefoldin subunit alpha (pfdA) from Pyrobaculum aerophilum (strain ATCC 51768 / DSM 7523 / JCM 9630 / CIP 104966 / NBRC 100827 / IM2).